The chain runs to 140 residues: MKAVQRIFQTGRFSVAAGPSVRFQAGFLAANRQVRFSSNHGVSLEEINTKYNDFFSNVQDQFELQRGLNNCFAYDIVPSSDVIEQALRAARRVNDFPTAVRIFEGIKVKLPTKEQYQAYVKELKPVCNELGIVLKEDLFK.

It belongs to the cytochrome c oxidase subunit 5A family. In terms of assembly, component of the cytochrome c oxidase (complex IV, CIV), a multisubunit enzyme composed of a catalytic core of 3 subunits and several supernumerary subunits. The complex exists as a monomer or a dimer and forms supercomplexes (SCs) in the inner mitochondrial membrane with ubiquinol-cytochrome c oxidoreductase (cytochrome b-c1 complex, complex III, CIII).

Its subcellular location is the mitochondrion inner membrane. It participates in energy metabolism; oxidative phosphorylation. Component of the cytochrome c oxidase, the last enzyme in the mitochondrial electron transport chain which drives oxidative phosphorylation. The respiratory chain contains 3 multisubunit complexes succinate dehydrogenase (complex II, CII), ubiquinol-cytochrome c oxidoreductase (cytochrome b-c1 complex, complex III, CIII) and cytochrome c oxidase (complex IV, CIV), that cooperate to transfer electrons derived from NADH and succinate to molecular oxygen, creating an electrochemical gradient over the inner membrane that drives transmembrane transport and the ATP synthase. Cytochrome c oxidase is the component of the respiratory chain that catalyzes the reduction of oxygen to water. Electrons originating from reduced cytochrome c in the intermembrane space (IMS) are transferred via the dinuclear copper A center (CU(A)) of subunit 2 and heme A of subunit 1 to the active site in subunit 1, a binuclear center (BNC) formed by heme A3 and copper B (CU(B)). The BNC reduces molecular oxygen to 2 water molecules using 4 electrons from cytochrome c in the IMS and 4 protons from the mitochondrial matrix. The chain is Cytochrome c oxidase subunit 6, mitochondrial (cox6) from Schizosaccharomyces pombe (strain 972 / ATCC 24843) (Fission yeast).